Reading from the N-terminus, the 406-residue chain is Cysteine desulfurase (406 aa).

Residue Lys226 is modified to N6-(pyridoxal phosphate)lysine. Residue Cys364 is the Cysteine persulfide intermediate of the active site.

The protein belongs to the class-V pyridoxal-phosphate-dependent aminotransferase family. Csd subfamily. As to quaternary structure, homodimer. Interacts with SufE and the SufBCD complex composed of SufB, SufC and SufD. The interaction with SufE is required to mediate the direct transfer of the sulfur atom from the S-sulfanylcysteine. It depends on pyridoxal 5'-phosphate as a cofactor.

It localises to the cytoplasm. The enzyme catalyses (sulfur carrier)-H + L-cysteine = (sulfur carrier)-SH + L-alanine. It carries out the reaction L-selenocysteine + AH2 = hydrogenselenide + L-alanine + A + H(+). It participates in cofactor biosynthesis; iron-sulfur cluster biosynthesis. Cysteine desulfurases mobilize the sulfur from L-cysteine to yield L-alanine, an essential step in sulfur metabolism for biosynthesis of a variety of sulfur-containing biomolecules. Component of the suf operon, which is activated and required under specific conditions such as oxidative stress and iron limitation. Acts as a potent selenocysteine lyase in vitro, that mobilizes selenium from L-selenocysteine. Selenocysteine lyase activity is however unsure in vivo. In Escherichia coli O45:K1 (strain S88 / ExPEC), this protein is Cysteine desulfurase.